Consider the following 195-residue polypeptide: PRELI domain containing protein 3B (195 aa).

Positions 1–172 (MKIWTSEHVF…VIHKLNAEIE (172 aa)) constitute a PRELI/MSF1 domain. Ser-46 and Ser-51 each carry phosphoserine.

This sequence belongs to the slowmo family.

In Mus musculus (Mouse), this protein is PRELI domain containing protein 3B (Prelid3b).